A 595-amino-acid chain; its full sequence is NADH-quinone oxidoreductase subunit C/D (595 aa).

The tract at residues 1–185 (MTDLTAQAAC…DPFELTKAKQ (185 aa)) is NADH dehydrogenase I subunit C. Positions 209 to 595 (DFMFLNLGPN…IDFVMSDVDR (387 aa)) are NADH dehydrogenase I subunit D.

In the N-terminal section; belongs to the complex I 30 kDa subunit family. This sequence in the C-terminal section; belongs to the complex I 49 kDa subunit family. NDH-1 is composed of 13 different subunits. Subunits NuoB, CD, E, F, and G constitute the peripheral sector of the complex.

The protein localises to the cell inner membrane. The catalysed reaction is a quinone + NADH + 5 H(+)(in) = a quinol + NAD(+) + 4 H(+)(out). NDH-1 shuttles electrons from NADH, via FMN and iron-sulfur (Fe-S) centers, to quinones in the respiratory chain. The immediate electron acceptor for the enzyme in this species is believed to be ubiquinone. Couples the redox reaction to proton translocation (for every two electrons transferred, four hydrogen ions are translocated across the cytoplasmic membrane), and thus conserves the redox energy in a proton gradient. This is NADH-quinone oxidoreductase subunit C/D from Enterobacter sp. (strain 638).